The chain runs to 240 residues: MAQEVENNNNDHLVQSSDPEHPANLIPELCRKFYNWGWVTGTGGGTSIRRGDHIFIAPSGVQKELIQPHNIFVLEFPTPKYPPSDRKYIRKPLELKPSACTPLFLTAFERGAGCCIHTHSQWAVLVTLLVEREKGPDACFEISNIEQIKGIPRGKGKGMLGFFDTLKIPIIENTAFEEDLTGSLEKAMDQYPDTYAVLVRRHGIYVWGDDVAKAKTQCESLDYLFQLAVEMHKLGLPWVK.

Residues 1–17 (MAQEVENNNNDHLVQSS) show a composition bias toward polar residues. Residues 1 to 20 (MAQEVENNNNDHLVQSSDPE) form a disordered region. Cysteine 100 is a binding site for substrate. Histidine 117 and histidine 119 together coordinate Zn(2+). The active-site Proton donor/acceptor is glutamate 146. A Zn(2+)-binding site is contributed by histidine 202.

It belongs to the aldolase class II family. MtnB subfamily. The cofactor is Zn(2+).

It localises to the cytoplasm. It carries out the reaction 5-(methylsulfanyl)-D-ribulose 1-phosphate = 5-methylsulfanyl-2,3-dioxopentyl phosphate + H2O. It functions in the pathway amino-acid biosynthesis; L-methionine biosynthesis via salvage pathway; L-methionine from S-methyl-5-thio-alpha-D-ribose 1-phosphate: step 2/6. Catalyzes the dehydration of methylthioribulose-1-phosphate (MTRu-1-P) into 2,3-diketo-5-methylthiopentyl-1-phosphate (DK-MTP-1-P). In Neosartorya fischeri (strain ATCC 1020 / DSM 3700 / CBS 544.65 / FGSC A1164 / JCM 1740 / NRRL 181 / WB 181) (Aspergillus fischerianus), this protein is Methylthioribulose-1-phosphate dehydratase.